We begin with the raw amino-acid sequence, 104 residues long: Ig lambda-2 chain C region (104 aa).

One can recognise an Ig-like domain in the interval 6–99 (PTLTVFPPSS…EGDTVEKSLS (94 aa)). A disulfide bridge connects residues cysteine 27 and cysteine 85.

The protein is Ig lambda-2 chain C region (Iglc2) of Mus musculus (Mouse).